A 371-amino-acid chain; its full sequence is MASTARKTFEINNNVQVVDPSAAIFQYSREEEKLLDDEAPWRTDPHYFHTVKISAVALIKMVTHARSGGIYEIMGIMYGKVRDGTFWIMDVAALPVQGTETRVNAGNEAMEYMVNFQTANAEAGKGELLRGWYHSHPGYGCWLSGIDVNTQLNNQKFNDPYLAVVIDPNRTVSAGKVEIGAFRTYPEGYTPPATGNSQYQSIPMDKIEDFGVHANAYYPLKVEIYKSKLDEKMLDLLWNKYWVATLSSNSLVSNLEYSTSQVQDLNAKLRAASQSISNSSSKLKLKPTQPTTKGKETTEGSDKKLKKGEKEFSGVEEEETPLNKVTQESSRITSEAENGIISQLLKEKLFNTPLTQSVDDKSAQATVQGRY.

Residues 51-188 enclose the MPN domain; it reads VKISAVALIK…IGAFRTYPEG (138 aa). His-134, His-136, and Asp-147 together coordinate Zn(2+). Positions 134 to 147 match the JAMM motif motif; that stretch reads HSHPGYGCWLSGID. Positions 278–292 are enriched in low complexity; it reads NSSSKLKLKPTQPTT. 2 disordered regions span residues 278 to 333 and 352 to 371; these read NSSS…SRIT and TPLT…QGRY. Positions 293-313 are enriched in basic and acidic residues; sequence KGKETTEGSDKKLKKGEKEFS. The segment covering 323 to 333 has biased composition (polar residues); the sequence is NKVTQESSRIT.

The protein belongs to the peptidase M67A family. CSN5 subfamily. In terms of assembly, component of the COP9 signalosome (CSN) complex.

It is found in the cytoplasm. It localises to the nucleus. Catalytic Component of the COP9 signalosome (CSN) complex that acts as an regulator of the ubiquitin (Ubl) conjugation pathway by mediating the deneddylation of the cullin subunit of SCF-type E3 ubiquitin-protein ligase complexes. In Cryptococcus neoformans var. neoformans serotype D (strain B-3501A) (Filobasidiella neoformans), this protein is COP9 signalosome complex subunit 5 (RRI1).